A 357-amino-acid polypeptide reads, in one-letter code: S-adenosylmethionine:tRNA ribosyltransferase-isomerase (357 aa).

Belongs to the QueA family. As to quaternary structure, monomer.

It localises to the cytoplasm. The enzyme catalyses 7-aminomethyl-7-carbaguanosine(34) in tRNA + S-adenosyl-L-methionine = epoxyqueuosine(34) in tRNA + adenine + L-methionine + 2 H(+). It participates in tRNA modification; tRNA-queuosine biosynthesis. Transfers and isomerizes the ribose moiety from AdoMet to the 7-aminomethyl group of 7-deazaguanine (preQ1-tRNA) to give epoxyqueuosine (oQ-tRNA). The protein is S-adenosylmethionine:tRNA ribosyltransferase-isomerase of Buchnera aphidicola subsp. Schizaphis graminum (strain Sg).